Consider the following 210-residue polypeptide: uncharacterized protein (210 aa).

Transmembrane regions (helical) follow at residues 42–62, 66–86, 126–146, 147–167, and 189–209; these read ITLG…VLFV, ALHG…GFLM, VVVY…EMWQ, IILA…VISL, and AGIV…NEII.

The protein belongs to the Rht family.

The protein resides in the cell membrane. This is an uncharacterized protein from Haemophilus influenzae (strain ATCC 51907 / DSM 11121 / KW20 / Rd).